The primary structure comprises 250 residues: Aquaporin TIP2-2 (250 aa).

A run of 2 helical transmembrane segments spans residues 22–42 and 54–74; these read VAEF…AIAF and AGLV…VSVA. An NPA 1 motif is present at residues 83-85; sequence NPA. Transmembrane regions (helical) follow at residues 97-119, 142-162, and 169-189; these read TVLT…CLLL, GVVF…ATAA, and LGTI…LAAG. Positions 197–199 match the NPA 2 motif; sequence NPA. Residues 218-238 form a helical membrane-spanning segment; it reads WVGPLIGGGLAGLVYGDVFIG.

It belongs to the MIP/aquaporin (TC 1.A.8) family. TIP (TC 1.A.8.10) subfamily.

Its subcellular location is the vacuole membrane. Aquaporins facilitate the transport of water and small neutral solutes across cell membranes. This chain is Aquaporin TIP2-2 (TIP2-2), found in Zea mays (Maize).